A 479-amino-acid polypeptide reads, in one-letter code: MSDGFDRAPGAGRGRSRGLGRGGGGPEGGGFPNGAGPAERARHQPPQPKAPGFLQPPPLRQPRTTPPPGAQCEVPASPQRPSRPGALPEQTRPLRAPPSSQDKIPQQNSESAMAKPQVVVAPVLMSKLSVNAPEFYPSGYSSSYTESYEDGCEDYPTLSEYVQDFLNHLTEQPGSFETEIEQFAETLNGCVTTDDALQELVELIYQQATSIPNFSYMGARLCNYLSHHLTISPQSGNFRQLLLQRCRTEYEVKDQAAKGDEVTRKRFHAFVLFLGELYLNLEIKGTNGQVTRADILQVGLRELLNALFSNPMDDNLICAVKLLKLTGSVLEDAWKEKGKMDMEEIIQRIENVVLDANCSRDVKQMLLKLVELRSSNWGRVHATSTYREATPENDPNYFMNEPTFYTSDGVPFTAADPDYQEKYQELLEREDFFPDYEENGTDLSGAGDPYLDDIDDEMDPEIEEAYEKFCLESERKRKQ.

The disordered stretch occupies residues 1–114 (MSDGFDRAPG…PQQNSESAMA (114 aa)). Residue serine 2 is modified to N-acetylalanine. Residues 11 to 33 (AGRGRSRGLGRGGGGPEGGGFPN) are compositionally biased toward gly residues. Arginine 21 carries the post-translational modification Omega-N-methylarginine. The segment covering 45 to 69 (PPQPKAPGFLQPPPLRQPRTTPPPG) has biased composition (pro residues). Polar residues predominate over residues 98-111 (PSSQDKIPQQNSES). The segment at 116–143 (PQVVVAPVLMSKLSVNAPEFYPSGYSSS) is PABPC1-interacting motif-2 (PAM2). Positions 157 to 375 (TLSEYVQDFL…LLKLVELRSS (219 aa)) are PAIP1 middle domain (PAIP1M). The MIF4G domain maps to 159–376 (SEYVQDFLNH…LKLVELRSSN (218 aa)). The interval 435–455 (DYEENGTDLSGAGDPYLDDID) is disordered. Residues 440-479 (GTDLSGAGDPYLDDIDDEMDPEIEEAYEKFCLESERKRKQ) are PABPC1-interacting motif-1 (PAM1).

In terms of assembly, interacts with the RRM1-RRM2 and C-terminus regions of PABPC1 in a 1:1 stoichiometry. Interacts with EIF4A. As to quaternary structure, (Microbial infection) Interacts (via PAIP1M) with human SARS coronaviruses SARS-COV and SARS-COV-2 NSP3 protein (via SARS-unique domain); the interaction increases binding affinity with PABPC1.

The protein localises to the cytoplasm. Its function is as follows. Acts as a coactivator in the regulation of translation initiation of poly(A)-containing mRNAs. Its stimulatory activity on translation is mediated via its action on PABPC1. Competes with PAIP2 for binding to PABPC1. Its association with EIF4A and PABPC1 may potentiate contacts between mRNA termini. May also be involved in translationally coupled mRNA turnover. Implicated with other RNA-binding proteins in the cytoplasmic deadenylation/translational and decay interplay of the FOS mRNA mediated by the major coding-region determinant of instability (mCRD) domain. Functionally, (Microbial infection) Upon interaction with SARS coronavirus SARS-CoV NSP3 protein, plays an important role in viral protein synthesis. In Homo sapiens (Human), this protein is Polyadenylate-binding protein-interacting protein 1.